A 516-amino-acid polypeptide reads, in one-letter code: Putative F-box and FNIP repeat-containing protein L414 (516 aa).

An F-box domain is found at 4-49 (INDLNMDVILHLLTFLTDKNKLNFMMTCTHLYQFISCVKYNNFQLF). FNIP repeat units follow at residues 123-165 (FNHT…FGEN), 166-208 (FNKM…LMYS), 341-383 (YNPK…NFNG), 385-428 (YDNI…FGKL), and 429-470 (YNKP…FGYM).

This is Putative F-box and FNIP repeat-containing protein L414 from Acanthamoeba polyphaga (Amoeba).